The chain runs to 410 residues: MKEELIERFTRYVKIDTQSNEDSHTVPTTPGQIEFGKLLVEELKEVGLTEVTMDDNGYVMATLPANTDKDVPVIGFLAHLDTATDFTGKNVKPQIHENFDGNAITLNEELNIVLTPEQFPELPSYKGHTIITTDGTTLLGADDKAGLTEIMVAMNYLIHNPQIKHGKIRVAFTPDEEIGRGPAHFDVEAFGASFAYMMDGGPLGGLEYESFNAAGAKLTFNGTNTHPGTAKNKMRNATKLAMEFNGHLPVEEAPEYTEGYEGFYHLLSLNGDVEQSKAYYIIRDFDRKNFEARKNTIENIVKQMQEKYGQDAVVLEMNDQYYNMLEKIEPVREIVDIAYEAMKSLNIEPNIHPIRGGTDGSQLSYMGLPTPNIFTGGENYHGKFEYVSVDVMEKAVQVIIEIARRFEEQA.

His79 is a Zn(2+) binding site. Residue Asp81 is part of the active site. Zn(2+) is bound at residue Asp142. Glu176 functions as the Proton acceptor in the catalytic mechanism. The Zn(2+) site is built by Glu177, Asp199, and His381.

The protein belongs to the peptidase M20B family. Zn(2+) serves as cofactor.

Its subcellular location is the cytoplasm. The enzyme catalyses Release of the N-terminal residue from a tripeptide.. Its function is as follows. Cleaves the N-terminal amino acid of tripeptides. This Bacillus anthracis (strain A0248) protein is Peptidase T.